Reading from the N-terminus, the 150-residue chain is 3-dehydroquinate dehydratase (150 aa).

The active-site Proton acceptor is the Tyr-26. Substrate contacts are provided by Asn-77, His-83, and Asp-90. His-103 acts as the Proton donor in catalysis. Substrate-binding positions include 104-105 and Arg-114; that span reads LS.

Belongs to the type-II 3-dehydroquinase family. As to quaternary structure, homododecamer.

The enzyme catalyses 3-dehydroquinate = 3-dehydroshikimate + H2O. It functions in the pathway metabolic intermediate biosynthesis; chorismate biosynthesis; chorismate from D-erythrose 4-phosphate and phosphoenolpyruvate: step 3/7. Functionally, catalyzes a trans-dehydration via an enolate intermediate. This Yersinia enterocolitica serotype O:8 / biotype 1B (strain NCTC 13174 / 8081) protein is 3-dehydroquinate dehydratase.